A 138-amino-acid chain; its full sequence is RELLDVDGNFLRNGGSYYIVPAFRGKGGGLELARTGSETCPRTVVQAPAEQSRGLPARLSTPPRIRYIGPEFYLTIEFEEQKPPSCLRDSNLQWKVEEESQIVKIASKEEEQLFGSFQIKPYRDDYKLVYCEPQQGGR.

Cysteine 40 and cysteine 86 are oxidised to a cystine.

This sequence belongs to the protease inhibitor I3 (leguminous Kunitz-type inhibitor) family. In terms of assembly, heterodimer of an alpha and a beta chain linked by a disulfide bond.

In terms of biological role, inhibition of trypsin. The protein is Trypsin inhibitor DE5 alpha chain of Adenanthera pavonina (Sandal bead tree).